The following is a 316-amino-acid chain: Coproporphyrin III ferrochelatase (316 aa).

Fe-coproporphyrin III-binding positions include Tyr-13, Arg-30, Arg-46–Tyr-47, Ser-54, and Tyr-125. Fe(2+)-binding residues include His-183 and Glu-264.

This sequence belongs to the ferrochelatase family.

It localises to the cytoplasm. The enzyme catalyses Fe-coproporphyrin III + 2 H(+) = coproporphyrin III + Fe(2+). It functions in the pathway porphyrin-containing compound metabolism; protoheme biosynthesis. In terms of biological role, involved in coproporphyrin-dependent heme b biosynthesis. Catalyzes the insertion of ferrous iron into coproporphyrin III to form Fe-coproporphyrin III. The sequence is that of Coproporphyrin III ferrochelatase from Geobacillus kaustophilus (strain HTA426).